The following is an 836-amino-acid chain: ATP-binding cassette sub-family B member 6 (836 aa).

Residues M1 to C26 lie on the Lumenal side of the membrane. The interval M1 to W205 is required for the lysosomal targeting. The segment at M1–R236 is required for ATPase activity. C8 and C26 are disulfide-bonded. A helical membrane pass occupies residues F27 to V47. Residues L48–P72 lie on the Cytoplasmic side of the membrane. A helical membrane pass occupies residues Y73–G93. Residues R94 to Y106 lie on the Lumenal side of the membrane. A helical transmembrane segment spans residues L107–V127. Residues E128–S147 lie on the Cytoplasmic side of the membrane. The helical transmembrane segment at L148 to W168 threads the bilayer. Over N169–Q185 the chain is Lumenal. A helical membrane pass occupies residues F186 to A206. The Cytoplasmic segment spans residues P207–T264. The chain crosses the membrane as a helical span at residues V265 to F285. The ABC transmembrane type-1 domain occupies V265 to T556. Over Y286 to T305 the chain is Lumenal. The helical transmembrane segment at V306–V326 threads the bilayer. Residues S327 to R375 lie on the Cytoplasmic side of the membrane. Residues G376–A396 form a helical membrane-spanning segment. D397 is a topological domain (lumenal). A helical transmembrane segment spans residues I398–F418. Residues L419 to Q499 lie on the Cytoplasmic side of the membrane. The chain crosses the membrane as a helical span at residues T500–V520. The Lumenal segment spans residues S521 to D529. A helical membrane pass occupies residues F530–Y550. Topologically, residues Y551–S836 are cytoplasmic. The region spanning V590–L824 is the ABC transporter domain. ATP contacts are provided by residues Y599 and G623–R634.

This sequence belongs to the ABC transporter superfamily. ABCB family. Heavy Metal importer (TC 3.A.1.210) subfamily. As to quaternary structure, homodimer. N-glycosylated. As to expression, ubiquitously expressed. Highly expressed in testis by meiotic pachytene spermatocytes and post-meiotic early spermatids.

It localises to the cell membrane. The protein resides in the mitochondrion outer membrane. It is found in the endoplasmic reticulum membrane. The protein localises to the golgi apparatus membrane. Its subcellular location is the endosome membrane. It localises to the lysosome membrane. The protein resides in the late endosome membrane. It is found in the early endosome membrane. The protein localises to the secreted. Its subcellular location is the extracellular exosome. It localises to the mitochondrion. The protein resides in the endosome. It is found in the multivesicular body membrane. The protein localises to the melanosome membrane. It carries out the reaction heme b(in) + ATP + H2O = heme b(out) + ADP + phosphate + H(+). It catalyses the reaction coproporphyrin III(in) + ATP + H2O = coproporphyrin III(out) + ADP + phosphate + H(+). The enzyme catalyses pheophorbide a(in) + ATP + H2O = pheophorbide a(out) + ADP + phosphate + H(+). The catalysed reaction is coproporphyrinogen III(in) + ATP + H2O = coproporphyrinogen III(out) + ADP + phosphate + H(+). It carries out the reaction protoporphyrin IX(in) + ATP + H2O = protoporphyrin IX(out) + ADP + phosphate + H(+). It catalyses the reaction coproporphyrin I(in) + ATP + H2O = coproporphyrin I(out) + ADP + phosphate + H(+). The enzyme catalyses uroporphyrin I(in) + ATP + H2O = uroporphyrin I(out) + ADP + phosphate + H(+). The catalysed reaction is uroporphyrin III(in) + ATP + H2O = uroporphyrin III(out) + ADP + phosphate + H(+). In terms of biological role, ATP-dependent transporter that catalyzes the transport of a broad-spectrum of porphyrins from the cytoplasm to the extracellular space through the plasma membrane or into the vesicle lumen. May also function as an ATP-dependent importer of porphyrins from the cytoplasm into the mitochondria, in turn may participate in the de novo heme biosynthesis regulation and in the coordination of heme and iron homeostasis during phenylhydrazine stress. May play a key role in the early steps of melanogenesis producing PMEL amyloid fibrils. In vitro, it confers to cells a resistance to toxic metal such as arsenic and cadmium and against chemotherapeutics agent such as 5-fluorouracil, SN-38 and vincristin. In addition may play a role in the transition metal homeostasis. This is ATP-binding cassette sub-family B member 6 from Rattus norvegicus (Rat).